Reading from the N-terminus, the 150-residue chain is Leukotriene C4 synthase (150 aa).

At Met-1–Ala-6 the chain is on the cytoplasmic side. A helical transmembrane segment spans residues Leu-7–Ile-27. The Lumenal portion of the chain corresponds to Ser-28–Arg-48. Arg-30 provides a ligand contact to glutathione. The Proton donor role is filled by Arg-31. Ser-36 carries the phosphoserine modification. The helical transmembrane segment at Val-49–Val-69 threads the bilayer. Residues Arg-51–Asn-55, Gln-53, and Glu-58–Tyr-59 each bind glutathione. Over Ala-70–Phe-73 the chain is Cytoplasmic. The chain crosses the membrane as a helical span at residues Phe-74–Phe-94. Residue Tyr-93–Tyr-97 participates in glutathione binding. The Lumenal segment spans residues Gln-95–Arg-104. Catalysis depends on Arg-104, which acts as the Proton acceptor. Residues Leu-105–Leu-124 traverse the membrane as a helical segment. Topologically, residues Gly-125–Ala-150 are cytoplasmic.

It belongs to the MAPEG family. In terms of assembly, homotrimer. Interacts with ALOX5AP and ALOX5. Post-translationally, phosphorylation at Ser-36 by RPS6KB1 inhibits the leukotriene-C4 synthase activity. In terms of tissue distribution, widely expressed.

The protein localises to the nucleus outer membrane. It is found in the endoplasmic reticulum membrane. It localises to the nucleus membrane. It catalyses the reaction leukotriene C4 = leukotriene A4 + glutathione. It carries out the reaction (13S,14S)-epoxy-(4Z,7Z,9E,11E,16Z,19Z)-docosahexaenoate + glutathione = (13R)-S-glutathionyl-(14S)-hydroxy-(4Z,7Z,9E,11E,16Z,19Z)-docosahexaenoate. It participates in lipid metabolism; leukotriene C4 biosynthesis. Inhibited by MK886. Catalyzes the conjugation of leukotriene A4 with reduced glutathione (GSH) to form leukotriene C4 with high specificity. Can also catalyze the transfer of a glutathionyl group from glutathione (GSH) to 13(S),14(S)-epoxy-docosahexaenoic acid to form maresin conjugate in tissue regeneration 1 (MCTR1), a bioactive lipid mediator that possess potent anti-inflammatory and proresolving actions. The protein is Leukotriene C4 synthase (Ltc4s) of Mus musculus (Mouse).